A 547-amino-acid chain; its full sequence is Inositol 1,4,5-trisphosphate receptor-interacting protein-like 1 (547 aa).

An N-terminal signal peptide occupies residues 1–22 (MAVISLMFLAVMYVVHHPLMVS). Over 23–96 (DRMDLDTLAR…PFQAGGQDGG (74 aa)) the chain is Extracellular. A coiled-coil region spans residues 28–66 (DTLARSRQLEKRMSEEMRQLEMEFEERSRAAEQKQKVEN). The chain crosses the membrane as a helical span at residues 97-117 (PLGWILGNLWNAGLFCLFLIF). At 118-547 (ELLRQSMQHE…LPCSPVAGGL (430 aa)) the chain is on the cytoplasmic side.

The protein belongs to the ITPRIP family.

Its subcellular location is the cell membrane. Its function is as follows. Functions as a ligand of CD3E, inhibiting TCR-CD3 complex signaling to regulate T cell activation. Induces stable CD3E-NCK1 binding, thereby preventing the CD3E-ZAP70 interaction and subsequently inhibiting the activation of the downstream ERK-NFkB signaling cascade and calcium influx. The sequence is that of Inositol 1,4,5-trisphosphate receptor-interacting protein-like 1 (Itpripl1) from Mus musculus (Mouse).